Consider the following 292-residue polypeptide: Probable vesicular-fusion protein sec17 homolog (292 aa).

The protein belongs to the SNAP family.

The protein localises to the membrane. Its function is as follows. Required for vesicular transport between the endoplasmic reticulum and the Golgi apparatus. This chain is Probable vesicular-fusion protein sec17 homolog, found in Neurospora crassa (strain ATCC 24698 / 74-OR23-1A / CBS 708.71 / DSM 1257 / FGSC 987).